The chain runs to 163 residues: D-aminoacyl-tRNA deacylase (163 aa).

Positions 141–142 (GP) match the Gly-cisPro motif, important for rejection of L-amino acids motif.

Belongs to the DTD family. As to quaternary structure, homodimer.

The protein localises to the cytoplasm. The catalysed reaction is glycyl-tRNA(Ala) + H2O = tRNA(Ala) + glycine + H(+). It carries out the reaction a D-aminoacyl-tRNA + H2O = a tRNA + a D-alpha-amino acid + H(+). In terms of biological role, an aminoacyl-tRNA editing enzyme that deacylates mischarged D-aminoacyl-tRNAs. Also deacylates mischarged glycyl-tRNA(Ala), protecting cells against glycine mischarging by AlaRS. Acts via tRNA-based rather than protein-based catalysis; rejects L-amino acids rather than detecting D-amino acids in the active site. By recycling D-aminoacyl-tRNA to D-amino acids and free tRNA molecules, this enzyme counteracts the toxicity associated with the formation of D-aminoacyl-tRNA entities in vivo and helps enforce protein L-homochirality. This is D-aminoacyl-tRNA deacylase from Neisseria meningitidis serogroup B (strain ATCC BAA-335 / MC58).